The chain runs to 276 residues: Octopine-binding periplasmic protein (276 aa).

The N-terminal stretch at 1 to 20 (MKLKTILCAALLLVAGQAAA) is a signal peptide. Cys57 and Cys64 are joined by a disulfide.

Belongs to the bacterial solute-binding protein 3 family.

It is found in the periplasm. Functionally, component of the octopine active transport system probably consisting of four subunits: Q, M, P and T. This Agrobacterium tumefaciens (strain Ach5) protein is Octopine-binding periplasmic protein (occT).